A 273-amino-acid chain; its full sequence is Dermonecrotic toxin LafSicTox-betaIE1 (273 aa).

The active site involves H5. Mg(2+) is bound by residues E25 and D27. The active-site Nucleophile is the H41. 2 disulfide bridges follow: C45–C51 and C47–C189. D85 contributes to the Mg(2+) binding site. A glycan (N-linked (GlcNAc...) asparagine) is linked at N250.

It belongs to the arthropod phospholipase D family. Class II subfamily. Requires Mg(2+) as cofactor. Expressed by the venom gland.

It localises to the secreted. It catalyses the reaction an N-(acyl)-sphingosylphosphocholine = an N-(acyl)-sphingosyl-1,3-cyclic phosphate + choline. The catalysed reaction is an N-(acyl)-sphingosylphosphoethanolamine = an N-(acyl)-sphingosyl-1,3-cyclic phosphate + ethanolamine. It carries out the reaction a 1-acyl-sn-glycero-3-phosphocholine = a 1-acyl-sn-glycero-2,3-cyclic phosphate + choline. The enzyme catalyses a 1-acyl-sn-glycero-3-phosphoethanolamine = a 1-acyl-sn-glycero-2,3-cyclic phosphate + ethanolamine. Its function is as follows. Dermonecrotic toxins cleave the phosphodiester linkage between the phosphate and headgroup of certain phospholipids (sphingolipid and lysolipid substrates), forming an alcohol (often choline) and a cyclic phosphate. This toxin acts on sphingomyelin (SM). It may also act on ceramide phosphoethanolamine (CPE), lysophosphatidylcholine (LPC) and lysophosphatidylethanolamine (LPE), but not on lysophosphatidylserine (LPS), and lysophosphatidylglycerol (LPG). It acts by transphosphatidylation, releasing exclusively cyclic phosphate products as second products. Induces dermonecrosis, hemolysis, increased vascular permeability, edema, inflammatory response, and platelet aggregation. This Loxosceles aff. spinulosa (strain GJB-2008) (Recluse spider) protein is Dermonecrotic toxin LafSicTox-betaIE1.